Reading from the N-terminus, the 461-residue chain is MKVTQEKLPRSQMGLNVEVEGEKSKQAYEKLVRDTMRTARIPGFRPGKAPRQLVLQFYGKERLRAQALENLIDSSLKEAIEQESIASLGNLQLRDSFEELLGRYQPGEPLSFKAAVDVQPEVQLGTYTGLTVRYSEVPYEAKQVDDQLEQYREQRAVLVPVEGRAAEVGDTAVIDFAGTKAADGNEIVGGKATDFEVELLPGRLIAGFTEGIIGMQIGESTELALRFPDDYPQQELAGVDAKFAVSLKDLKIKELPVLDDDFAGDISEFETLEALRAFLEQQQQEQAAEKTRANRDAAIIKALVAETTVDLPETLVNREVQFLAEQSFRNLQQQGIDPSRIFTEENMPRVRETLRVDAENRLKRTLALAQVARAENIVVEEEQVAARIVELRSELEEEVSEQALAEFAREEMLTEKILEWLAEHSTIELTLPGEAIEPGSGEDAPPEVAAGATEPEAQPNS.

Positions 169–256 (GDTAVIDFAG…LKDLKIKELP (88 aa)) constitute a PPIase FKBP-type domain. The tract at residues 432-461 (PGEAIEPGSGEDAPPEVAAGATEPEAQPNS) is disordered.

It belongs to the FKBP-type PPIase family. Tig subfamily.

It is found in the cytoplasm. The catalysed reaction is [protein]-peptidylproline (omega=180) = [protein]-peptidylproline (omega=0). In terms of biological role, involved in protein export. Acts as a chaperone by maintaining the newly synthesized protein in an open conformation. Functions as a peptidyl-prolyl cis-trans isomerase. The chain is Trigger factor from Gloeobacter violaceus (strain ATCC 29082 / PCC 7421).